The primary structure comprises 326 residues: Putative ribose-phosphate pyrophosphokinase 2 (326 aa).

ATP-binding positions include D43 to E45 and R102 to Q103. H136 serves as a coordination point for Mg(2+). D-ribose 5-phosphate is bound by residues D225 and N229 to T233.

Belongs to the ribose-phosphate pyrophosphokinase family. Class I subfamily. Homohexamer. The cofactor is Mg(2+).

It is found in the cytoplasm. The enzyme catalyses D-ribose 5-phosphate + ATP = 5-phospho-alpha-D-ribose 1-diphosphate + AMP + H(+). Its pathway is metabolic intermediate biosynthesis; 5-phospho-alpha-D-ribose 1-diphosphate biosynthesis; 5-phospho-alpha-D-ribose 1-diphosphate from D-ribose 5-phosphate (route I): step 1/1. In terms of biological role, involved in the biosynthesis of the central metabolite phospho-alpha-D-ribosyl-1-pyrophosphate (PRPP) via the transfer of pyrophosphoryl group from ATP to 1-hydroxyl of ribose-5-phosphate (Rib-5-P). The protein is Putative ribose-phosphate pyrophosphokinase 2 of Streptococcus pyogenes serotype M18 (strain MGAS8232).